We begin with the raw amino-acid sequence, 356 residues long: UDP-3-O-acylglucosamine N-acyltransferase (356 aa).

His242 serves as the catalytic Proton acceptor.

The protein belongs to the transferase hexapeptide repeat family. LpxD subfamily. Homotrimer.

The enzyme catalyses a UDP-3-O-[(3R)-3-hydroxyacyl]-alpha-D-glucosamine + a (3R)-hydroxyacyl-[ACP] = a UDP-2-N,3-O-bis[(3R)-3-hydroxyacyl]-alpha-D-glucosamine + holo-[ACP] + H(+). The protein operates within bacterial outer membrane biogenesis; LPS lipid A biosynthesis. Its function is as follows. Catalyzes the N-acylation of UDP-3-O-acylglucosamine using 3-hydroxyacyl-ACP as the acyl donor. Is involved in the biosynthesis of lipid A, a phosphorylated glycolipid that anchors the lipopolysaccharide to the outer membrane of the cell. The polypeptide is UDP-3-O-acylglucosamine N-acyltransferase (Acinetobacter baumannii (strain AB307-0294)).